The chain runs to 203 residues: Ribosomal RNA large subunit methyltransferase E (203 aa).

5 residues coordinate S-adenosyl-L-methionine: glycine 51, tryptophan 53, aspartate 69, aspartate 85, and aspartate 109. Lysine 149 serves as the catalytic Proton acceptor.

The protein belongs to the class I-like SAM-binding methyltransferase superfamily. RNA methyltransferase RlmE family.

The protein localises to the cytoplasm. The enzyme catalyses uridine(2552) in 23S rRNA + S-adenosyl-L-methionine = 2'-O-methyluridine(2552) in 23S rRNA + S-adenosyl-L-homocysteine + H(+). In terms of biological role, specifically methylates the uridine in position 2552 of 23S rRNA at the 2'-O position of the ribose in the fully assembled 50S ribosomal subunit. In Methanoculleus marisnigri (strain ATCC 35101 / DSM 1498 / JR1), this protein is Ribosomal RNA large subunit methyltransferase E.